Reading from the N-terminus, the 132-residue chain is D-ribose pyranase (132 aa).

The active-site Proton donor is the H20. Substrate contacts are provided by residues D28, H99, and 121–123 (YSN).

The protein belongs to the RbsD / FucU family. RbsD subfamily. Homodecamer.

It localises to the cytoplasm. It catalyses the reaction beta-D-ribopyranose = beta-D-ribofuranose. It functions in the pathway carbohydrate metabolism; D-ribose degradation; D-ribose 5-phosphate from beta-D-ribopyranose: step 1/2. Functionally, catalyzes the interconversion of beta-pyran and beta-furan forms of D-ribose. The protein is D-ribose pyranase of Streptococcus uberis (strain ATCC BAA-854 / 0140J).